A 428-amino-acid chain; its full sequence is Enolase (428 aa).

Q162 is a (2R)-2-phosphoglycerate binding site. The active-site Proton donor is E204. The Mg(2+) site is built by D241, E288, and D315. The (2R)-2-phosphoglycerate site is built by K340, R369, S370, and K391. The Proton acceptor role is filled by K340.

It belongs to the enolase family. Requires Mg(2+) as cofactor.

It is found in the cytoplasm. It localises to the secreted. The protein resides in the cell surface. It catalyses the reaction (2R)-2-phosphoglycerate = phosphoenolpyruvate + H2O. It functions in the pathway carbohydrate degradation; glycolysis; pyruvate from D-glyceraldehyde 3-phosphate: step 4/5. In terms of biological role, catalyzes the reversible conversion of 2-phosphoglycerate (2-PG) into phosphoenolpyruvate (PEP). It is essential for the degradation of carbohydrates via glycolysis. This Azobacteroides pseudotrichonymphae genomovar. CFP2 protein is Enolase.